Consider the following 1127-residue polypeptide: Ras guanine nucleotide exchange factor F (1127 aa).

Disordered regions lie at residues 1–82 and 96–154; these read MTDK…SLLN and NSGG…SSSS. Composition is skewed to low complexity over residues 23–53 and 67–82; these read NQPS…TTSP and NNNN…SLLN. The segment covering 122-132 has biased composition (polar residues); sequence RTSTTLAQFSG. Residues 133–154 are compositionally biased toward low complexity; sequence SSLPNTENSSPPPSSSLISSSS. Kelch repeat units lie at residues 212-261, 262-311, 313-366, 367-418, and 420-469; these read GFYL…LYNN, SMYI…VESG, MIVF…MHKG, NMYV…LFQD, and IFIS…VKGN. In terms of domain architecture, LisH spans 557-589; that stretch reads SHQFVLQLIMEYLERNTYHKVIAAIQKESGVLH. The N-terminal Ras-GEF domain maps to 673–804; sequence NKVQIKAATF…KLRELKKKLQ (132 aa). One can recognise a Ras-GEF domain in the interval 835 to 1062; it reads DELEIARQMT…YDLNLLSESL (228 aa). A disordered region spans residues 1090 to 1127; that stretch reads LGSARELNNSNRDSNNITGSSSNNNSNSSNSLSPIVKL. Low complexity predominate over residues 1103–1127; the sequence is SNNITGSSSNNNSNSSNSLSPIVKL.

Its function is as follows. Promotes the exchange of Ras-bound GDP by GTP. The polypeptide is Ras guanine nucleotide exchange factor F (gefF) (Dictyostelium discoideum (Social amoeba)).